The sequence spans 193 residues: ATP-dependent Clp protease proteolytic subunit (193 aa).

Serine 98 serves as the catalytic Nucleophile. The active site involves histidine 123.

Belongs to the peptidase S14 family. Fourteen ClpP subunits assemble into 2 heptameric rings which stack back to back to give a disk-like structure with a central cavity, resembling the structure of eukaryotic proteasomes.

The protein localises to the cytoplasm. It carries out the reaction Hydrolysis of proteins to small peptides in the presence of ATP and magnesium. alpha-casein is the usual test substrate. In the absence of ATP, only oligopeptides shorter than five residues are hydrolyzed (such as succinyl-Leu-Tyr-|-NHMec, and Leu-Tyr-Leu-|-Tyr-Trp, in which cleavage of the -Tyr-|-Leu- and -Tyr-|-Trp bonds also occurs).. Functionally, cleaves peptides in various proteins in a process that requires ATP hydrolysis. Has a chymotrypsin-like activity. Plays a major role in the degradation of misfolded proteins. The sequence is that of ATP-dependent Clp protease proteolytic subunit from Pasteurella multocida (strain Pm70).